A 400-amino-acid polypeptide reads, in one-letter code: MADFIRTQIFGTCFEITSRYVDLNPVGMGAFGLVCSARDQLTNQNVAIKKIMKPFSTPVLAKRTYRELKLLKHLRHENLITLSDIFISPLEDIYFVTELLGTDLHRLLTSRPLEHQFIQYFLYQILRGLKYVHSAGVVHRDLKPSNILINENCDLKICDFGLARIQDPQMTGYVSTRYYRAPEIMLTWQKYDVEVDIWSAGCIFAEMLRGKPLFPGKDHVHQFSIITELLGNPPDDVIETIGSENTLNFVKSLPKRERIPLSQKFPNADPDAVDLLEKMLVFDPRKRINAADALAHPYLAPYHEPSDEPVASEKFDWSFNDADLPVDTWKVMMYSEILDFHNVDSSAVEQQQQQPQPPQPQLQQQQQPPQQPQQPQQPQXAQQPVQPVQGDYVPQVAPRS.

A Protein kinase domain is found at 20 to 299 (YVDLNPVGMG…AADALAHPYL (280 aa)). ATP contacts are provided by residues 26–34 (VGMGAFGLV) and lysine 49. Residue aspartate 141 is the Proton acceptor of the active site. A Phosphothreonine modification is found at threonine 171. A TXY motif is present at residues 171 to 173 (TGY). Tyrosine 173 is subject to Phosphotyrosine. The tract at residues 345–400 (SSAVEQQQQQPQPPQPQLQQQQQPPQQPQQPQQPQXAQQPVQPVQGDYVPQVAPRS) is disordered. Residues 361 to 389 (QLQQQQQPPQQPQQPQQPQXAQQPVQPVQ) show a composition bias toward low complexity.

It belongs to the protein kinase superfamily. Ser/Thr protein kinase family. MAP kinase subfamily. HOG1 sub-subfamily. The cofactor is Mg(2+). Dually phosphorylated on Thr-171 and Tyr-173, which activates the enzyme. Phosphorylation is induced by osmotic stress.

Its subcellular location is the cytoplasm. It localises to the nucleus. The catalysed reaction is L-seryl-[protein] + ATP = O-phospho-L-seryl-[protein] + ADP + H(+). It catalyses the reaction L-threonyl-[protein] + ATP = O-phospho-L-threonyl-[protein] + ADP + H(+). With respect to regulation, activated by tyrosine and threonine phosphorylation. Its function is as follows. Proline-directed serine/threonine-protein kinase involved in a signal transduction pathway that is activated by changes in the osmolarity of the extracellular environment. Controls osmotic regulation of transcription of target genes. In Blastobotrys adeninivorans (Yeast), this protein is Mitogen-activated protein kinase hog1 (hog1).